Here is a 101-residue protein sequence, read N- to C-terminus: Small ribosomal subunit protein uS14 (101 aa).

Belongs to the universal ribosomal protein uS14 family. As to quaternary structure, part of the 30S ribosomal subunit. Contacts proteins S3 and S10.

Binds 16S rRNA, required for the assembly of 30S particles and may also be responsible for determining the conformation of the 16S rRNA at the A site. This Escherichia coli O8 (strain IAI1) protein is Small ribosomal subunit protein uS14.